Consider the following 162-residue polypeptide: MAKKKSKSSNSNTIALNKKARHNYSLTDKFEGGMSLQGWEIKSIRSGKVNISDCYVHIKDREAYLLGAEISPLNAASSHVVCDPNRDRKLLLNRRELDKIIAAVERDGYSLIATAMYWKACWVKLEFYLGKGKKDHDKRSDIKDREWAVDKGRLMKNKNLDR.

It belongs to the SmpB family.

The protein localises to the cytoplasm. Required for rescue of stalled ribosomes mediated by trans-translation. Binds to transfer-messenger RNA (tmRNA), required for stable association of tmRNA with ribosomes. tmRNA and SmpB together mimic tRNA shape, replacing the anticodon stem-loop with SmpB. tmRNA is encoded by the ssrA gene; the 2 termini fold to resemble tRNA(Ala) and it encodes a 'tag peptide', a short internal open reading frame. During trans-translation Ala-aminoacylated tmRNA acts like a tRNA, entering the A-site of stalled ribosomes, displacing the stalled mRNA. The ribosome then switches to translate the ORF on the tmRNA; the nascent peptide is terminated with the 'tag peptide' encoded by the tmRNA and targeted for degradation. The ribosome is freed to recommence translation, which seems to be the essential function of trans-translation. The protein is SsrA-binding protein of Colwellia psychrerythraea (strain 34H / ATCC BAA-681) (Vibrio psychroerythus).